The following is a 187-amino-acid chain: MSKKSGKGKGKNDGDELGAEKEQVLRTKVESLIQRLGHEQERADRAKAAENELRARLFDLDKDFKNEKDRLFSITSDMTRQYKQMQDELLNQVNDLNKTVIEKDEEIKKKDQQIQDMTKDYEYKLKKKDDEIQDLKRKIEEMSAEFAKMLKDTLDKMQERIEMVQWDSDTDPQMMKRLKDMTGLSNN.

Residues 1-23 (MSKKSGKGKGKNDGDELGAEKEQ) are disordered. A compositionally biased stretch (basic and acidic residues) spans 10–23 (GKNDGDELGAEKEQ).

This sequence belongs to the DRC12 family. Component of the nexin-dynein regulatory complex (N-DRC).

Its subcellular location is the cytoplasm. It is found in the cytoskeleton. It localises to the flagellum axoneme. Its function is as follows. Component of the nexin-dynein regulatory complex (N-DRC), a key regulator of ciliary/flagellar motility which maintains the alignment and integrity of the distal axoneme and regulates microtubule sliding in motile axonemes. The protein is Dynein regulatory complex protein 12 (DRC12) of Tetrahymena thermophila (strain SB210).